A 223-amino-acid chain; its full sequence is Deoxyribose-phosphate aldolase (223 aa).

The Proton donor/acceptor role is filled by aspartate 91. The active-site Schiff-base intermediate with acetaldehyde is the lysine 153. The active-site Proton donor/acceptor is lysine 183.

This sequence belongs to the DeoC/FbaB aldolase family. DeoC type 1 subfamily.

It is found in the cytoplasm. It carries out the reaction 2-deoxy-D-ribose 5-phosphate = D-glyceraldehyde 3-phosphate + acetaldehyde. It participates in carbohydrate degradation; 2-deoxy-D-ribose 1-phosphate degradation; D-glyceraldehyde 3-phosphate and acetaldehyde from 2-deoxy-alpha-D-ribose 1-phosphate: step 2/2. Its function is as follows. Catalyzes a reversible aldol reaction between acetaldehyde and D-glyceraldehyde 3-phosphate to generate 2-deoxy-D-ribose 5-phosphate. This chain is Deoxyribose-phosphate aldolase, found in Mycoplasmopsis synoviae (strain 53) (Mycoplasma synoviae).